Reading from the N-terminus, the 325-residue chain is Endo-1,4-beta-xylanase 2 (325 aa).

Positions 1-18 (MLYTSIFAAAMAASGAMA) are cleaved as a signal peptide. The GH10 domain maps to 26–325 (ASNCTTLDSF…KAAVKAIMAI (300 aa)). N-linked (GlcNAc...) asparagine glycosylation is present at Asn28. Glu157 (proton donor) is an active-site residue. Catalysis depends on Glu262, which acts as the Nucleophile. A disulfide bond links Cys280 and Cys286.

It belongs to the glycosyl hydrolase 10 (cellulase F) family.

The protein localises to the secreted. It catalyses the reaction Endohydrolysis of (1-&gt;4)-beta-D-xylosidic linkages in xylans.. The protein operates within glycan degradation; xylan degradation. Endo-1,4-beta-xylanase involved in the hydrolysis of xylan, a major structural heterogeneous polysaccharide found in plant biomass representing the second most abundant polysaccharide in the biosphere, after cellulose. This is Endo-1,4-beta-xylanase 2 (xyl2) from Claviceps purpurea (Ergot fungus).